The following is a 61-amino-acid chain: Large ribosomal subunit protein uL30 (61 aa).

The protein belongs to the universal ribosomal protein uL30 family. As to quaternary structure, part of the 50S ribosomal subunit.

The protein is Large ribosomal subunit protein uL30 of Bordetella petrii (strain ATCC BAA-461 / DSM 12804 / CCUG 43448).